The chain runs to 469 residues: tRNA modification GTPase MnmE (469 aa).

(6S)-5-formyl-5,6,7,8-tetrahydrofolate contacts are provided by R38, E95, and R134. Positions 230–392 (GIRVALVGPP…LRRGLAALVD (163 aa)) constitute a TrmE-type G domain. Residues 240–245 (NAGKSS), 259–265 (SAQAGTT), and 284–287 (DTAG) contribute to the GTP site. S244 and T265 together coordinate Mg(2+). Residue K468 coordinates (6S)-5-formyl-5,6,7,8-tetrahydrofolate.

The protein belongs to the TRAFAC class TrmE-Era-EngA-EngB-Septin-like GTPase superfamily. TrmE GTPase family. As to quaternary structure, homodimer. Heterotetramer of two MnmE and two MnmG subunits. Requires K(+) as cofactor.

It is found in the cytoplasm. Exhibits a very high intrinsic GTPase hydrolysis rate. Involved in the addition of a carboxymethylaminomethyl (cmnm) group at the wobble position (U34) of certain tRNAs, forming tRNA-cmnm(5)s(2)U34. This Halorhodospira halophila (strain DSM 244 / SL1) (Ectothiorhodospira halophila (strain DSM 244 / SL1)) protein is tRNA modification GTPase MnmE.